The following is a 268-amino-acid chain: DNA repair protein RecO (268 aa).

The protein belongs to the RecO family.

Functionally, involved in DNA repair and RecF pathway recombination. The polypeptide is DNA repair protein RecO (Parasynechococcus marenigrum (strain WH8102)).